A 100-amino-acid polypeptide reads, in one-letter code: Urease subunit gamma (100 aa).

It belongs to the urease gamma subunit family. In terms of assembly, heterotrimer of UreA (gamma), UreB (beta) and UreC (alpha) subunits. Three heterotrimers associate to form the active enzyme.

The protein resides in the cytoplasm. The catalysed reaction is urea + 2 H2O + H(+) = hydrogencarbonate + 2 NH4(+). Its pathway is nitrogen metabolism; urea degradation; CO(2) and NH(3) from urea (urease route): step 1/1. The sequence is that of Urease subunit gamma from Streptomyces avermitilis (strain ATCC 31267 / DSM 46492 / JCM 5070 / NBRC 14893 / NCIMB 12804 / NRRL 8165 / MA-4680).